The following is a 105-amino-acid chain: Large ribosomal subunit protein eL30 (105 aa).

It belongs to the eukaryotic ribosomal protein eL30 family.

The sequence is that of Large ribosomal subunit protein eL30 (RPL30) from Eremothecium gossypii (strain ATCC 10895 / CBS 109.51 / FGSC 9923 / NRRL Y-1056) (Yeast).